The sequence spans 234 residues: Large ribosomal subunit protein uL1 (234 aa).

This sequence belongs to the universal ribosomal protein uL1 family. In terms of assembly, part of the 50S ribosomal subunit.

Functionally, binds directly to 23S rRNA. The L1 stalk is quite mobile in the ribosome, and is involved in E site tRNA release. In terms of biological role, protein L1 is also a translational repressor protein, it controls the translation of the L11 operon by binding to its mRNA. The polypeptide is Large ribosomal subunit protein uL1 (Anaeromyxobacter sp. (strain Fw109-5)).